The chain runs to 396 residues: Tryptophan synthase beta chain (396 aa).

Lys-86 carries the N6-(pyridoxal phosphate)lysine modification.

Belongs to the TrpB family. As to quaternary structure, tetramer of two alpha and two beta chains. Pyridoxal 5'-phosphate serves as cofactor.

The catalysed reaction is (1S,2R)-1-C-(indol-3-yl)glycerol 3-phosphate + L-serine = D-glyceraldehyde 3-phosphate + L-tryptophan + H2O. It participates in amino-acid biosynthesis; L-tryptophan biosynthesis; L-tryptophan from chorismate: step 5/5. The beta subunit is responsible for the synthesis of L-tryptophan from indole and L-serine. The protein is Tryptophan synthase beta chain of Pectobacterium atrosepticum (strain SCRI 1043 / ATCC BAA-672) (Erwinia carotovora subsp. atroseptica).